The primary structure comprises 270 residues: MAASSSGEKEKERMGGVSGMTGLGSTRERLLSALEDLEVLSRELIEMLAISRNQKLLQLEEENQVLELLIHRDGDFQELMKLALNQGKVHHEMQALEKEVEKRDSDIQQLQKQLKEAEQILATAVYQAKEKLKSIEKARKGAISSEEIIKYAHRISASNAVCAPLTWVPGDPRRPYPTDLEMRSGLLGQMNNPSTSGVNGHLPGDALAAGRLPDVLAPQYPWQSNDMSVNMLPPNHSTDFLLEPPGHNKENEDDVEVMSTDSSSSSSDSD.

Positions methionine 1–glycine 22 are disordered. Alanine 2 is modified (N-acetylalanine). The stretch at threonine 26 to lysine 131 forms a coiled coil. A Phosphoserine modification is found at serine 32. The segment at methionine 227–aspartate 270 is disordered. A compositionally biased stretch (low complexity) spans serine 259–aspartate 270.

It belongs to the Mediator complex subunit 4 family. In terms of assembly, component of the Mediator complex, which is composed of MED1, MED4, MED6, MED7, MED8, MED9, MED10, MED11, MED12, MED13, MED13L, MED14, MED15, MED16, MED17, MED18, MED19, MED20, MED21, MED22, MED23, MED24, MED25, MED26, MED27, MED29, MED30, MED31, CCNC, CDK8 and CDC2L6/CDK11. The MED12, MED13, CCNC and CDK8 subunits form a distinct module termed the CDK8 module. Mediator containing the CDK8 module is less active than Mediator lacking this module in supporting transcriptional activation. Individual preparations of the Mediator complex lacking one or more distinct subunits have been variously termed ARC, CRSP, DRIP, PC2, SMCC and TRAP.

The protein resides in the nucleus. Component of the Mediator complex, a coactivator involved in the regulated transcription of nearly all RNA polymerase II-dependent genes. Mediator functions as a bridge to convey information from gene-specific regulatory proteins to the basal RNA polymerase II transcription machinery. Mediator is recruited to promoters by direct interactions with regulatory proteins and serves as a scaffold for the assembly of a functional preinitiation complex with RNA polymerase II and the general transcription factors. This Rattus norvegicus (Rat) protein is Mediator of RNA polymerase II transcription subunit 4 (Med4).